Here is a 117-residue protein sequence, read N- to C-terminus: Large ribosomal subunit protein eL18 (117 aa).

The protein belongs to the eukaryotic ribosomal protein eL18 family.

This chain is Large ribosomal subunit protein eL18, found in Archaeoglobus fulgidus (strain ATCC 49558 / DSM 4304 / JCM 9628 / NBRC 100126 / VC-16).